Reading from the N-terminus, the 202-residue chain is Probable GTP-binding protein EngB (202 aa).

An EngB-type G domain is found at 22–197 (VFPEYAFIGR…LDYIENISKE (176 aa)). GTP-binding positions include 30–37 (GRSNVGKS), 57–61 (GKTML), 75–78 (DLPG), 142–145 (TKAD), and 173–178 (YFISSS). Ser37 and Thr59 together coordinate Mg(2+).

This sequence belongs to the TRAFAC class TrmE-Era-EngA-EngB-Septin-like GTPase superfamily. EngB GTPase family. It depends on Mg(2+) as a cofactor.

Its function is as follows. Necessary for normal cell division and for the maintenance of normal septation. This chain is Probable GTP-binding protein EngB, found in Bacteroides thetaiotaomicron (strain ATCC 29148 / DSM 2079 / JCM 5827 / CCUG 10774 / NCTC 10582 / VPI-5482 / E50).